Reading from the N-terminus, the 199-residue chain is Probable chemoreceptor glutamine deamidase CheD (199 aa).

The protein belongs to the CheD family.

It catalyses the reaction L-glutaminyl-[protein] + H2O = L-glutamyl-[protein] + NH4(+). Its function is as follows. Probably deamidates glutamine residues to glutamate on methyl-accepting chemotaxis receptors (MCPs), playing an important role in chemotaxis. The protein is Probable chemoreceptor glutamine deamidase CheD of Cereibacter sphaeroides (strain ATCC 17023 / DSM 158 / JCM 6121 / CCUG 31486 / LMG 2827 / NBRC 12203 / NCIMB 8253 / ATH 2.4.1.) (Rhodobacter sphaeroides).